A 175-amino-acid polypeptide reads, in one-letter code: Orotate phosphoribosyltransferase (175 aa).

Residues R89, K90, K93, and 115–123 (EDIATTGQS) contribute to the 5-phospho-alpha-D-ribose 1-diphosphate site. Positions 119 and 147 each coordinate orotate.

The protein belongs to the purine/pyrimidine phosphoribosyltransferase family. PyrE subfamily. As to quaternary structure, homodimer. Requires Mg(2+) as cofactor.

It carries out the reaction orotidine 5'-phosphate + diphosphate = orotate + 5-phospho-alpha-D-ribose 1-diphosphate. It functions in the pathway pyrimidine metabolism; UMP biosynthesis via de novo pathway; UMP from orotate: step 1/2. Its function is as follows. Catalyzes the transfer of a ribosyl phosphate group from 5-phosphoribose 1-diphosphate to orotate, leading to the formation of orotidine monophosphate (OMP). The polypeptide is Orotate phosphoribosyltransferase (Halobacterium salinarum (strain ATCC 700922 / JCM 11081 / NRC-1) (Halobacterium halobium)).